The chain runs to 305 residues: Autophagy-related protein 27 (305 aa).

Residues 1–22 (MARYKGLSILSLFAVFSSLASA) form the signal peptide. Topologically, residues 23-242 (ELDCSNIKVD…EDGGSAPSGH (220 aa)) are lumenal. The MRH domain maps to 24-231 (LDCSNIKVDG…EWKTKYACEN (208 aa)). 2 disulfide bridges follow: C26–C66 and C74–C81. A glycan (N-linked (GlcNAc...) asparagine) is linked at N58. N-linked (GlcNAc...) asparagine glycosylation occurs at N85. C156 and C229 form a disulfide bridge. The interval 163–202 (LEGLESPKPDGDKKKDGEKKDDDKKDNKDKEGKSKRDGEE) is disordered. Residues 243–263 (WGFFTWVIVLYVVLVSLPLLS) form a helical membrane-spanning segment. Over 264 to 305 (ERVTNVRCHSQPVPVHFGLSDIRLVAQLQPVWSSRVGLASSQ) the chain is Cytoplasmic.

The protein belongs to the ATG27 family.

The protein resides in the cytoplasmic vesicle membrane. The protein localises to the golgi apparatus membrane. It localises to the mitochondrion membrane. Its subcellular location is the preautophagosomal structure membrane. Functionally, effector of phosphatidylinositol 3-phosphate kinase signaling. Regulates the cytoplasm to vacuole transport (Cvt) vesicle formation. Plays a role in ATG protein retrieval from the pre-autophagosomal structure (PAS). The polypeptide is Autophagy-related protein 27 (Arthroderma benhamiae (strain ATCC MYA-4681 / CBS 112371) (Trichophyton mentagrophytes)).